An 82-amino-acid chain; its full sequence is RNA-binding protein Hfq (82 aa).

A Sm domain is found at 11 to 71 (DTFLNHVRKT…ISTIMPGAPI (61 aa)).

It belongs to the Hfq family. In terms of assembly, homohexamer.

Functionally, RNA chaperone that binds small regulatory RNA (sRNAs) and mRNAs to facilitate mRNA translational regulation in response to envelope stress, environmental stress and changes in metabolite concentrations. Also binds with high specificity to tRNAs. The polypeptide is RNA-binding protein Hfq (Bradyrhizobium sp. (strain BTAi1 / ATCC BAA-1182)).